The sequence spans 103 residues: MLSDLYEEIKLRKTQPKEGSYTNYLFEKGLDKILKKVGEETTEVVIAAKNNNEELISEITDLTYHLLVLLAEKDIPLEDIKQELQSREGKLSKTSDRKEINDL.

Residues 84-103 form a disordered region; that stretch reads LQSREGKLSKTSDRKEINDL.

This sequence belongs to the PRA-PH family.

The protein resides in the cytoplasm. It carries out the reaction 1-(5-phospho-beta-D-ribosyl)-ATP + H2O = 1-(5-phospho-beta-D-ribosyl)-5'-AMP + diphosphate + H(+). It functions in the pathway amino-acid biosynthesis; L-histidine biosynthesis; L-histidine from 5-phospho-alpha-D-ribose 1-diphosphate: step 2/9. The protein is Phosphoribosyl-ATP pyrophosphatase (hisE) of Listeria innocua serovar 6a (strain ATCC BAA-680 / CLIP 11262).